Here is a 65-residue protein sequence, read N- to C-terminus: Photosystem II reaction center protein Z (65 aa).

2 consecutive transmembrane segments (helical) span residues 11–31 and 44–64; these read LVLA…VIFA and WLAC…DGIF.

It belongs to the PsbZ family. PSII is composed of 1 copy each of membrane proteins PsbA, PsbB, PsbC, PsbD, PsbE, PsbF, PsbH, PsbI, PsbJ, PsbK, PsbL, PsbM, PsbT, PsbY, PsbZ, Psb30/Ycf12, at least 3 peripheral proteins of the oxygen-evolving complex and a large number of cofactors. It forms dimeric complexes.

Its subcellular location is the plastid. The protein localises to the chloroplast thylakoid membrane. May control the interaction of photosystem II (PSII) cores with the light-harvesting antenna, regulates electron flow through the 2 photosystem reaction centers. PSII is a light-driven water plastoquinone oxidoreductase, using light energy to abstract electrons from H(2)O, generating a proton gradient subsequently used for ATP formation. This is Photosystem II reaction center protein Z from Euglena gracilis.